Here is a 270-residue protein sequence, read N- to C-terminus: Formamidopyrimidine-DNA glycosylase (270 aa).

Catalysis depends on Pro2, which acts as the Schiff-base intermediate with DNA. Glu3 (proton donor) is an active-site residue. Lys58 (proton donor; for beta-elimination activity) is an active-site residue. 3 residues coordinate DNA: His91, Arg110, and Arg151. The FPG-type zinc finger occupies 236–270; that stretch reads FVYGRGGQPCKVCGTALREVKLGQRASVYCPRCQR. The active-site Proton donor; for delta-elimination activity is Arg260.

Belongs to the FPG family. As to quaternary structure, monomer. The cofactor is Zn(2+).

It carries out the reaction Hydrolysis of DNA containing ring-opened 7-methylguanine residues, releasing 2,6-diamino-4-hydroxy-5-(N-methyl)formamidopyrimidine.. The catalysed reaction is 2'-deoxyribonucleotide-(2'-deoxyribose 5'-phosphate)-2'-deoxyribonucleotide-DNA = a 3'-end 2'-deoxyribonucleotide-(2,3-dehydro-2,3-deoxyribose 5'-phosphate)-DNA + a 5'-end 5'-phospho-2'-deoxyribonucleoside-DNA + H(+). In terms of biological role, involved in base excision repair of DNA damaged by oxidation or by mutagenic agents. Acts as a DNA glycosylase that recognizes and removes damaged bases. Has a preference for oxidized purines, such as 7,8-dihydro-8-oxoguanine (8-oxoG). Has AP (apurinic/apyrimidinic) lyase activity and introduces nicks in the DNA strand. Cleaves the DNA backbone by beta-delta elimination to generate a single-strand break at the site of the removed base with both 3'- and 5'-phosphates. The protein is Formamidopyrimidine-DNA glycosylase of Pseudomonas putida (strain GB-1).